Reading from the N-terminus, the 1030-residue chain is MMS19 nucleotide excision repair protein homolog (1030 aa).

Ala-2 is subject to N-acetylalanine. HEAT repeat units lie at residues Gln-866–Lys-904, Leu-908–Gln-946, Ser-949–Pro-987, and Leu-990–Pro-1028. Position 1027 is a phosphoserine (Ser-1027).

This sequence belongs to the MET18/MMS19 family. In terms of assembly, component of the CIA complex. In the CIA complex, interacts directly with CIAO2B and CIAO3. Component of the MMXD complex, composed of CIAO1, ERCC2, CIAO2B, MMS19 and SLC25A5. Interacts with CIAO2B; the interaction is direct. Interacts with ERCC2/XPD; the interaction is direct. Interacts with ERCC3/XPB and NCOA3/RAC3. Interacts with RTEL1; the interaction mediates the association of RTEL1 with the CIA complex. Interacts with BRIP1. Interacts with KIF4A; the interaction facilitates the transfer of Fe-S clusters to KIF4A to ensure proper localization of KIF4A to the mitotic machinery components. Interacts with CCDC117; the interaction is indirect. In terms of processing, ubiquitinated; undergoes 'Lys-48'-linked polyubiquitination.

It localises to the nucleus. The protein resides in the cytoplasm. The protein localises to the cytoskeleton. Its subcellular location is the spindle. Its function is as follows. Key component of the cytosolic iron-sulfur protein assembly (CIA) complex, a multiprotein complex that mediates the incorporation of iron-sulfur cluster into apoproteins specifically involved in DNA metabolism and genomic integrity. In the CIA complex, MMS19 acts as an adapter between early-acting CIA components and a subset of cellular target Fe/S proteins such as ERCC2/XPD, FANCJ and RTEL1, thereby playing a key role in nucleotide excision repair (NER), homologous recombination-mediated double-strand break DNA repair, DNA replication and RNA polymerase II (POL II) transcription. As a CIA complex component and in collaboration with CIAO1 and CIAO2, binds to and facilitates the assembly of most cytosolic-nuclear Fe/S proteins. As part of the mitotic spindle-associated MMXD complex, plays a role in chromosome segregation, probably by facilitating iron-sulfur cluster assembly into ERCC2/XPD. Together with CIAO2, facilitates the transfer of Fe-S clusters to the motor protein KIF4A, which ensures proper localization of KIF4A to mitotic machinery components to promote the progression of mitosis. Indirectly acts as a transcriptional coactivator of estrogen receptor (ER), via its role in iron-sulfur insertion into some component of the TFIIH-machinery. This Bos taurus (Bovine) protein is MMS19 nucleotide excision repair protein homolog.